A 628-amino-acid polypeptide reads, in one-letter code: Probable potassium transport system protein Kup (628 aa).

Transmembrane regions (helical) follow at residues 15-35, 55-75, 104-124, 142-162, 173-193, 210-230, 252-272, 281-301, 342-362, 372-392, 400-420, and 426-446; these read LAIA…LYSL, VISL…VLFV, AGLL…DAVI, PHLS…LFWI, LFGP…LWHI, TFMA…VLVL, WYVL…ALLM, PFFL…STIA, IYVP…VIAF, YGIA…VVMV, LLVA…FGAN, and EGGW…MTWY.

Belongs to the HAK/KUP transporter (TC 2.A.72) family.

Its subcellular location is the cell inner membrane. The enzyme catalyses K(+)(in) + H(+)(in) = K(+)(out) + H(+)(out). Its function is as follows. Transport of potassium into the cell. Likely operates as a K(+):H(+) symporter. In Paraburkholderia xenovorans (strain LB400), this protein is Probable potassium transport system protein Kup.